The sequence spans 142 residues: Small ribosomal subunit protein bS6 (142 aa).

The disordered stretch occupies residues 110 to 142 (NKKPSHAKEKHEKTEHAHSHHTEEAGSKESHSE).

The protein belongs to the bacterial ribosomal protein bS6 family.

Its function is as follows. Binds together with bS18 to 16S ribosomal RNA. This chain is Small ribosomal subunit protein bS6, found in Helicobacter acinonychis (strain Sheeba).